A 131-amino-acid chain; its full sequence is Small ribosomal subunit protein uS8 (131 aa).

This sequence belongs to the universal ribosomal protein uS8 family. As to quaternary structure, part of the 30S ribosomal subunit. Contacts proteins S5 and S12.

Functionally, one of the primary rRNA binding proteins, it binds directly to 16S rRNA central domain where it helps coordinate assembly of the platform of the 30S subunit. The sequence is that of Small ribosomal subunit protein uS8 from Campylobacter jejuni (strain RM1221).